The chain runs to 114 residues: uncharacterized protein (114 aa).

The segment at 1–114 is disordered; sequence MSTAASSRMR…HASQSPDTAY (114 aa). Residues 32-43 are compositionally biased toward low complexity; sequence CRRVPSRPCRPV.

This is an uncharacterized protein from Human adenovirus B serotype 7 (HAdV-7).